Here is a 224-residue protein sequence, read N- to C-terminus: RNA-binding protein 24-B (224 aa).

The region spanning 11–88 (TKIFVGGLPY…RKANVNLAYL (78 aa)) is the RRM domain.

It is found in the nucleus. It localises to the cytoplasm. In terms of biological role, multifunctional RNA-binding protein involved in the regulation of pre-mRNA splicing, mRNA stability and mRNA translation important for cell fate decision and differentiation. Plays a major role in pre-mRNA alternative splicing regulation. Mediates preferentially muscle-specific exon inclusion in numerous mRNAs important for striated cardiac and skeletal muscle cell differentiation. Binds to intronic splicing enhancer (ISE) composed of stretches of GU-rich motifs localized in flanking intron of exon that will be included by alternative splicing. Involved in embryonic stem cell (ESC) transition to cardiac cell differentiation by promoting pre-mRNA alternative splicing events of several pluripotency and/or differentiation genes. Plays a role in the regulation of mRNA stability and mRNA translation to which it is bound. Involved in myogenic differentiation by regulating myog levels. Binds to a huge amount of mRNAs. Required for embryonic heart development, sarcomer and M-band formation in striated muscles. This is RNA-binding protein 24-B (rbm24-b) from Xenopus laevis (African clawed frog).